The sequence spans 283 residues: Phosphatidylserine decarboxylase proenzyme (283 aa).

Catalysis depends on charge relay system; for autoendoproteolytic cleavage activity residues Asp90, His143, and Ser248. Ser248 serves as the catalytic Schiff-base intermediate with substrate; via pyruvic acid; for decarboxylase activity. Ser248 is modified (pyruvic acid (Ser); by autocatalysis).

The protein belongs to the phosphatidylserine decarboxylase family. PSD-B subfamily. Prokaryotic type I sub-subfamily. As to quaternary structure, heterodimer of a large membrane-associated beta subunit and a small pyruvoyl-containing alpha subunit. Pyruvate serves as cofactor. Is synthesized initially as an inactive proenzyme. Formation of the active enzyme involves a self-maturation process in which the active site pyruvoyl group is generated from an internal serine residue via an autocatalytic post-translational modification. Two non-identical subunits are generated from the proenzyme in this reaction, and the pyruvate is formed at the N-terminus of the alpha chain, which is derived from the carboxyl end of the proenzyme. The autoendoproteolytic cleavage occurs by a canonical serine protease mechanism, in which the side chain hydroxyl group of the serine supplies its oxygen atom to form the C-terminus of the beta chain, while the remainder of the serine residue undergoes an oxidative deamination to produce ammonia and the pyruvoyl prosthetic group on the alpha chain. During this reaction, the Ser that is part of the protease active site of the proenzyme becomes the pyruvoyl prosthetic group, which constitutes an essential element of the active site of the mature decarboxylase.

It is found in the cell membrane. It carries out the reaction a 1,2-diacyl-sn-glycero-3-phospho-L-serine + H(+) = a 1,2-diacyl-sn-glycero-3-phosphoethanolamine + CO2. Its pathway is phospholipid metabolism; phosphatidylethanolamine biosynthesis; phosphatidylethanolamine from CDP-diacylglycerol: step 2/2. In terms of biological role, catalyzes the formation of phosphatidylethanolamine (PtdEtn) from phosphatidylserine (PtdSer). This chain is Phosphatidylserine decarboxylase proenzyme, found in Francisella tularensis subsp. mediasiatica (strain FSC147).